The sequence spans 147 residues: Mitochondrial import receptor subunit TOM20 homolog (147 aa).

Residues 1–3 are Mitochondrial intermembrane-facing; sequence MVV. Residues 4–26 form a helical membrane-spanning segment; sequence VGKTSAIAAGVCGALFLGYCIYF. The Cytoplasmic portion of the chain corresponds to 27–147; sequence DRKRRSDPNF…AQNLAEDDVE (121 aa).

This sequence belongs to the Tom20 family. Forms part of the preprotein translocase complex of the outer mitochondrial membrane (TOM complex). Interacts with tom22.

The protein resides in the mitochondrion outer membrane. Central component of the receptor complex responsible for the recognition and translocation of cytosolically synthesized mitochondrial preproteins. Together with tom22 functions as the transit peptide receptor at the surface of the mitochondrion outer membrane and facilitates the movement of preproteins into the tom40 translocation pore. The sequence is that of Mitochondrial import receptor subunit TOM20 homolog (tomm20) from Xenopus tropicalis (Western clawed frog).